We begin with the raw amino-acid sequence, 325 residues long: D site-binding protein (325 aa).

Disordered regions lie at residues 1–98 (MARP…AGPS), 124–203 (LEHG…EVLM), and 230–256 (FSEE…QKDE). Positions 17–28 (GPAGAPPGGGAL) are enriched in gly residues. The segment covering 71–80 (AGPADAPSGA) has biased composition (low complexity). Residue serine 86 is modified to Phosphoserine. Residues 88 to 98 (RGRSGPVAGPS) are compositionally biased toward low complexity. Positions 129–153 (PPSPPPPGGLSPAPSPARTPAPSPG) are enriched in pro residues. Residues 154–171 (PGSCSSSSPRSSPGHAPA) show a composition bias toward low complexity. A bZIP domain is found at 255 to 318 (DEKYWSRRYK…SHYRAVLSRY (64 aa)). The interval 257 to 279 (KYWSRRYKNNEAAKRSRDARRLK) is basic motif. Positions 283–297 (ISVRAAFLEKENALL) are leucine-zipper.

It belongs to the bZIP family. PAR subfamily. In terms of assembly, binds DNA as a homodimer or a heterodimer. Can form a heterodimer with TEF. Expressed in the suprachiasmatic nuclei (SCN) and in most peripheral tissues, with a strong circadian rhythmicity.

The protein localises to the nucleus. This transcriptional activator recognizes and binds to the sequence 5'-RTTAYGTAAY-3' found in the promoter of genes such as albumin, CYP2A4 and CYP2A5. It is not essential for circadian rhythm generation, but modulates important clock output genes. May be a direct target for regulation by the circadian pacemaker component clock. May affect circadian period and sleep regulation. The sequence is that of D site-binding protein (Dbp) from Mus musculus (Mouse).